The following is a 200-amino-acid chain: Large ribosomal subunit protein uL22c (200 aa).

It belongs to the universal ribosomal protein uL22 family. In terms of assembly, part of the 50S ribosomal subunit.

It is found in the plastid. It localises to the chloroplast. In terms of biological role, this protein binds specifically to 23S rRNA. Functionally, the globular domain of the protein is located near the polypeptide exit tunnel on the outside of the subunit, while an extended beta-hairpin is found that lines the wall of the exit tunnel in the center of the 70S ribosome. The chain is Large ribosomal subunit protein uL22c (rpl22) from Medicago sativa (Alfalfa).